The sequence spans 190 residues: Large ribosomal subunit protein bL25 (190 aa).

Belongs to the bacterial ribosomal protein bL25 family. CTC subfamily. As to quaternary structure, part of the 50S ribosomal subunit; part of the 5S rRNA/L5/L18/L25 subcomplex. Contacts the 5S rRNA. Binds to the 5S rRNA independently of L5 and L18.

This is one of the proteins that binds to the 5S RNA in the ribosome where it forms part of the central protuberance. This chain is Large ribosomal subunit protein bL25, found in Neisseria gonorrhoeae (strain ATCC 700825 / FA 1090).